The primary structure comprises 463 residues: L-seryl-tRNA(Sec) selenium transferase (463 aa).

Lys295 bears the N6-(pyridoxal phosphate)lysine mark.

It belongs to the SelA family. As to quaternary structure, homodecamer; pentamer of dimers. Binds only one seryl-tRNA(Sec) per dimer. It depends on pyridoxal 5'-phosphate as a cofactor.

It is found in the cytoplasm. It carries out the reaction L-seryl-tRNA(Sec) + selenophosphate + H(+) = L-selenocysteinyl-tRNA(Sec) + phosphate. It functions in the pathway aminoacyl-tRNA biosynthesis; selenocysteinyl-tRNA(Sec) biosynthesis; selenocysteinyl-tRNA(Sec) from L-seryl-tRNA(Sec) (bacterial route): step 1/1. Functionally, converts seryl-tRNA(Sec) to selenocysteinyl-tRNA(Sec) required for selenoprotein biosynthesis. The protein is L-seryl-tRNA(Sec) selenium transferase of Escherichia coli O45:K1 (strain S88 / ExPEC).